Reading from the N-terminus, the 309-residue chain is Homoserine kinase (309 aa).

95–105 serves as a coordination point for ATP; sequence PQSRGLGSSAA.

Belongs to the GHMP kinase family. Homoserine kinase subfamily.

It localises to the cytoplasm. The enzyme catalyses L-homoserine + ATP = O-phospho-L-homoserine + ADP + H(+). The protein operates within amino-acid biosynthesis; L-threonine biosynthesis; L-threonine from L-aspartate: step 4/5. Catalyzes the ATP-dependent phosphorylation of L-homoserine to L-homoserine phosphate. The protein is Homoserine kinase of Corynebacterium glutamicum (strain R).